Here is a 20-residue protein sequence, read N- to C-terminus: Citrate synthase (20 aa).

Belongs to the citrate synthase family. Homohexamer.

The catalysed reaction is oxaloacetate + acetyl-CoA + H2O = citrate + CoA + H(+). Its pathway is carbohydrate metabolism; tricarboxylic acid cycle; isocitrate from oxaloacetate: step 1/2. Allosterically inhibited by NADH. In Streptomyces hygroscopicus, this protein is Citrate synthase (gltA).